The sequence spans 177 residues: Large ribosomal subunit protein uL22 (177 aa).

The segment at 118 to 177 (VESRPSREGRRGGAGESAGGARARRAQGSKAAAAKKAPASSSKKAATTTEASEEAKGGSQ) is disordered. A compositionally biased stretch (basic and acidic residues) spans 121-130 (RPSREGRRGG). Residues 145–167 (GSKAAAAKKAPASSSKKAATTTE) show a composition bias toward low complexity.

Belongs to the universal ribosomal protein uL22 family. Part of the 50S ribosomal subunit.

Functionally, this protein binds specifically to 23S rRNA; its binding is stimulated by other ribosomal proteins, e.g. L4, L17, and L20. It is important during the early stages of 50S assembly. It makes multiple contacts with different domains of the 23S rRNA in the assembled 50S subunit and ribosome. The globular domain of the protein is located near the polypeptide exit tunnel on the outside of the subunit, while an extended beta-hairpin is found that lines the wall of the exit tunnel in the center of the 70S ribosome. This chain is Large ribosomal subunit protein uL22, found in Mycobacterium sp. (strain KMS).